The following is a 116-amino-acid chain: Large ribosomal subunit protein bL19 (116 aa).

Belongs to the bacterial ribosomal protein bL19 family.

Functionally, this protein is located at the 30S-50S ribosomal subunit interface and may play a role in the structure and function of the aminoacyl-tRNA binding site. This chain is Large ribosomal subunit protein bL19, found in Haemophilus ducreyi (strain 35000HP / ATCC 700724).